The sequence spans 316 residues: Small ribosomal subunit protein RACK1 (316 aa).

WD repeat units follow at residues 13–44, 61–91, 103–133, 146–178, 190–220, 231–260, and 281–311; these read GHNGWVTSLATSLENPNMLLSGSRDKSLIIWN, GHSHIVSDCVISSDGAYALSASWDKTLRLWE, GHTNDVLSVSFSADNRQIVSGSRDRTIKLWN, GHTEWVSCVRFSPNPQNPVIVSSGWDKLVKVWE, GHTGYINAVTISPDGSLCASGGKDGTTMLWD, NANDEIHALVFSPNRYWLCAATSSSIIIFD, and SREPECVSLAWSADGQTLFAGYTDNIIRAWG.

The protein belongs to the WD repeat G protein beta family. Ribosomal protein RACK1 subfamily. As to quaternary structure, component of the small ribosomal subunit (SSU). Mature N.crassa ribosomes consist of a small (40S) and a large (60S) subunit. The 40S small subunit contains 1 molecule of ribosomal RNA (18S rRNA) and at least 32 different proteins. The large 60S subunit contains 3 rRNA molecules (26S, 5.8S and 5S rRNA) and at least 42 different proteins.

It localises to the cytoplasm. Its function is as follows. Component of the ribosome, a large ribonucleoprotein complex responsible for the synthesis of proteins in the cell. The small ribosomal subunit (SSU) binds messenger RNAs (mRNAs) and translates the encoded message by selecting cognate aminoacyl-transfer RNA (tRNA) molecules. The large subunit (LSU) contains the ribosomal catalytic site termed the peptidyl transferase center (PTC), which catalyzes the formation of peptide bonds, thereby polymerizing the amino acids delivered by tRNAs into a polypeptide chain. The nascent polypeptides leave the ribosome through a tunnel in the LSU and interact with protein factors that function in enzymatic processing, targeting, and the membrane insertion of nascent chains at the exit of the ribosomal tunnel. Required to activate general amino acid control under conditions of amino acid limitation in the vegetative growth phase, and for formation of protoperithecia in preparation for the sexual phase of the life cycle of N.crassa. The protein is Small ribosomal subunit protein RACK1 (cpc-2) of Neurospora crassa (strain ATCC 24698 / 74-OR23-1A / CBS 708.71 / DSM 1257 / FGSC 987).